We begin with the raw amino-acid sequence, 220 residues long: Putative pyrophosphatase PpaX (220 aa).

D9 (nucleophile) is an active-site residue.

Belongs to the HAD-like hydrolase superfamily. PpaX family. It depends on Mg(2+) as a cofactor.

The enzyme catalyses diphosphate + H2O = 2 phosphate + H(+). The sequence is that of Putative pyrophosphatase PpaX from Caldanaerobacter subterraneus subsp. tengcongensis (strain DSM 15242 / JCM 11007 / NBRC 100824 / MB4) (Thermoanaerobacter tengcongensis).